Reading from the N-terminus, the 157-residue chain is Urease accessory protein UreE (157 aa).

Belongs to the UreE family.

Its subcellular location is the cytoplasm. Involved in urease metallocenter assembly. Binds nickel. Probably functions as a nickel donor during metallocenter assembly. This Corynebacterium glutamicum (strain ATCC 13032 / DSM 20300 / JCM 1318 / BCRC 11384 / CCUG 27702 / LMG 3730 / NBRC 12168 / NCIMB 10025 / NRRL B-2784 / 534) protein is Urease accessory protein UreE.